The primary structure comprises 328 residues: 4-hydroxythreonine-4-phosphate dehydrogenase (328 aa).

Residues His-135 and Thr-136 each contribute to the substrate site. The a divalent metal cation site is built by His-165, His-210, and His-265. 3 residues coordinate substrate: Lys-273, Asn-282, and Arg-291.

This sequence belongs to the PdxA family. As to quaternary structure, homodimer. Zn(2+) serves as cofactor. Requires Mg(2+) as cofactor. The cofactor is Co(2+).

It is found in the cytoplasm. It catalyses the reaction 4-(phosphooxy)-L-threonine + NAD(+) = 3-amino-2-oxopropyl phosphate + CO2 + NADH. Its pathway is cofactor biosynthesis; pyridoxine 5'-phosphate biosynthesis; pyridoxine 5'-phosphate from D-erythrose 4-phosphate: step 4/5. Functionally, catalyzes the NAD(P)-dependent oxidation of 4-(phosphooxy)-L-threonine (HTP) into 2-amino-3-oxo-4-(phosphooxy)butyric acid which spontaneously decarboxylates to form 3-amino-2-oxopropyl phosphate (AHAP). In Pseudomonas aeruginosa (strain ATCC 15692 / DSM 22644 / CIP 104116 / JCM 14847 / LMG 12228 / 1C / PRS 101 / PAO1), this protein is 4-hydroxythreonine-4-phosphate dehydrogenase.